The primary structure comprises 210 residues: Quaternary-amine-specific corrinoid protein (210 aa).

The B12-binding N-terminal domain maps to Met1–Ala90. In terms of domain architecture, B12-binding spans Ala90–Gly210. His103 is a binding site for methylcob(III)alamin.

This sequence belongs to the methylamine corrinoid protein family. The proline betaine:THF methyl transfer system is composed of two methyltransferases, MtpB and MtqA, and the corrinoid protein MtqC. The L-carnitine:THF methyl transfer system is composed of two methyltransferases, MtcB and MtqA, and the corrinoid protein MtqC.

Involved in the degradation of the quaternary amines L-proline betaine and L-carnitine. Component of a corrinoid-dependent methyltransferase system that transfers a methyl group from L-proline betaine or L-carnitine to tetrahydrofolate (THF), forming methyl-THF, a key intermediate in the Wood-Ljungdahl acetogenesis pathway. Acts as a methyl group carrier between MtpB or MtcB, and MtqA. A methyl group from L-proline betaine or L-carnitine is first transferred to the corrinoid prosthetic group of MtqC by MtpB or MtcB, respectively, and then transferred from MtqC to THF by MtqA. The polypeptide is Quaternary-amine-specific corrinoid protein (Eubacterium limosum).